The chain runs to 109 residues: Ribonuclease P protein component (109 aa).

It belongs to the RnpA family. Consists of a catalytic RNA component (M1 or rnpB) and a protein subunit.

It catalyses the reaction Endonucleolytic cleavage of RNA, removing 5'-extranucleotides from tRNA precursor.. In terms of biological role, RNaseP catalyzes the removal of the 5'-leader sequence from pre-tRNA to produce the mature 5'-terminus. It can also cleave other RNA substrates such as 4.5S RNA. The protein component plays an auxiliary but essential role in vivo by binding to the 5'-leader sequence and broadening the substrate specificity of the ribozyme. In Nitratiruptor sp. (strain SB155-2), this protein is Ribonuclease P protein component.